The primary structure comprises 441 residues: MSETIAALATAYGIGSVSIVRLSGKDALATSLKLLKLSNLEPRYAKLAKIYSIDDEILDEGIVIYFKAPASFTGEDIVEFQTHGGVMVSERILNELIRAGARLAMPGEFSKRAFLNGKMDLAKAEAMQGLITSKSEIAAKILTRQMQGDLSKFVGEIRGEVVKTLAFVETMIDYADDDLPANLLEQTKLMLLKNSEKLERIATLSEQRRGLIDGFKIAIVGKPNVGKSSILNSFLAYERAIVSDEAGTTRDRIEENFKIGSHLVRIIDTAGIRKDAGKIEQIGINYSISAINEADIILAVFDGSCPSDEQDKEIIRLISNSNKKAFFILNKSDLAFKFDIELDGAIKISAKNDSSVVLKELEGYLKTQDTDEIMLSSNRQILSCKEASEALKRAFLRLNEEELEIFAYELNSAIKALASITKPFERSEILDEMFSHFCLGK.

(6S)-5-formyl-5,6,7,8-tetrahydrofolate-binding residues include Arg21, Glu79, and Lys118. Positions 214-370 (GFKIAIVGKP…LEGYLKTQDT (157 aa)) constitute a TrmE-type G domain. GTP-binding positions include 224–229 (NVGKSS), 243–249 (SDEAGTT), and 268–271 (DTAG). Mg(2+) is bound by residues Ser228 and Thr249. Residue Lys441 coordinates (6S)-5-formyl-5,6,7,8-tetrahydrofolate.

Belongs to the TRAFAC class TrmE-Era-EngA-EngB-Septin-like GTPase superfamily. TrmE GTPase family. As to quaternary structure, homodimer. Heterotetramer of two MnmE and two MnmG subunits. Requires K(+) as cofactor.

It is found in the cytoplasm. Exhibits a very high intrinsic GTPase hydrolysis rate. Involved in the addition of a carboxymethylaminomethyl (cmnm) group at the wobble position (U34) of certain tRNAs, forming tRNA-cmnm(5)s(2)U34. The polypeptide is tRNA modification GTPase MnmE (Campylobacter concisus (strain 13826)).